We begin with the raw amino-acid sequence, 270 residues long: UPF0354 protein BCAH187_A4826 (270 aa).

Belongs to the UPF0354 family.

The polypeptide is UPF0354 protein BCAH187_A4826 (Bacillus cereus (strain AH187)).